The sequence spans 295 residues: ATP synthase gamma chain (295 aa).

Belongs to the ATPase gamma chain family. In terms of assembly, F-type ATPases have 2 components, CF(1) - the catalytic core - and CF(0) - the membrane proton channel. CF(1) has five subunits: alpha(3), beta(3), gamma(1), delta(1), epsilon(1). CF(0) has three main subunits: a, b and c.

It is found in the cell inner membrane. Its function is as follows. Produces ATP from ADP in the presence of a proton gradient across the membrane. The gamma chain is believed to be important in regulating ATPase activity and the flow of protons through the CF(0) complex. This Aliarcobacter butzleri (strain RM4018) (Arcobacter butzleri) protein is ATP synthase gamma chain.